We begin with the raw amino-acid sequence, 374 residues long: Phosphate-binding protein PstS1 (374 aa).

Positions 1 to 23 are cleaved as a signal peptide; it reads MKIRLHTLLAVLTAAPLLLAAAG. A lipid anchor (N-palmitoyl cysteine) is attached at Cys-24. The S-diacylglycerol cysteine moiety is linked to residue Cys-24. The disordered stretch occupies residues 25 to 48; the sequence is GSKPPSGSPETGAGAGTVATTPAS. Phosphate contacts are provided by residues 58–60, Ser-88, Asp-106, and 189–191; these read STL and SGD.

This sequence belongs to the PstS family. In terms of assembly, the complex is composed of two ATP-binding proteins (PstB), two transmembrane proteins (PstC and PstA) and a solute-binding protein (PstS).

The protein localises to the cell membrane. Its subcellular location is the secreted. Functionally, functions in inorganic phosphate uptake, a phosphate-binding protein, although probably not the main uptake protein under phosphate starvation. Part of the ABC transporter complex PstSACB involved in phosphate import. In terms of biological role, a host TLR2 agonist (toll-like receptor), requires both host TLR1 and TLR2 as coreceptors. This is Phosphate-binding protein PstS1 (pstS1) from Mycobacterium bovis (strain BCG / Pasteur 1173P2).